We begin with the raw amino-acid sequence, 105 residues long: Transcriptional regulator SutA (105 aa).

The span at 1–37 (MSEEELEQDELDGADEDDGEELAAADDGEADSSDGDE) shows a compositional bias: acidic residues. Residues 1–105 (MSEEELEQDE…PDSKYGSRPI (105 aa)) form a disordered region. Composition is skewed to basic and acidic residues over residues 59-83 (AKQKERDALAKAMEEFLSRGGKVQE) and 92-105 (PPKKPDSKYGSRPI).

As to quaternary structure, interacts with RNA polymerase.

Functionally, causes widespread changes in gene expression, and plays a direct role in the regulation of genes encoding ribosomal components. Associates with chromosomal DNA through interaction with RNA polymerase. Contributes to biofilm formation and secondary metabolite production. Important during transitions to and from the survival state. The polypeptide is Transcriptional regulator SutA (Pseudomonas aeruginosa (strain UCBPP-PA14)).